Consider the following 598-residue polypeptide: Elongation factor 4 (598 aa).

Residues 4–185 (KNIRNFSIIA…TIIAKIPPPK (182 aa)) enclose the tr-type G domain. Residues 16–21 (DHGKST) and 132–135 (NKID) contribute to the GTP site.

The protein belongs to the TRAFAC class translation factor GTPase superfamily. Classic translation factor GTPase family. LepA subfamily.

The protein localises to the cell membrane. It catalyses the reaction GTP + H2O = GDP + phosphate + H(+). Required for accurate and efficient protein synthesis under certain stress conditions. May act as a fidelity factor of the translation reaction, by catalyzing a one-codon backward translocation of tRNAs on improperly translocated ribosomes. Back-translocation proceeds from a post-translocation (POST) complex to a pre-translocation (PRE) complex, thus giving elongation factor G a second chance to translocate the tRNAs correctly. Binds to ribosomes in a GTP-dependent manner. This is Elongation factor 4 from Mycoplasma genitalium (strain ATCC 33530 / DSM 19775 / NCTC 10195 / G37) (Mycoplasmoides genitalium).